Consider the following 130-residue polypeptide: uncharacterized protein (130 aa).

Residues 21-43 traverse the membrane as a helical segment; sequence VAVCTVAAEVLAIFTLVCTRVFI.

The protein localises to the membrane. This is an uncharacterized protein from Saccharomyces cerevisiae (strain ATCC 204508 / S288c) (Baker's yeast).